Reading from the N-terminus, the 477-residue chain is Small ribosomal subunit protein uS5m (477 aa).

It belongs to the universal ribosomal protein uS5 family. As to quaternary structure, component of the mitochondrial small ribosomal subunit (mt-SSU). Mature N.crassa 74S mitochondrial ribosomes consist of a small (37S) and a large (54S) subunit. The 37S small subunit contains a 16S ribosomal RNA (16S mt-rRNA) and 32 different proteins. The 54S large subunit contains a 23S rRNA (23S mt-rRNA) and 42 different proteins. uS3m, uS4m and uS5m form the narrow entry site of the mRNA channel.

The protein resides in the mitochondrion. Its function is as follows. Component of the mitochondrial ribosome (mitoribosome), a dedicated translation machinery responsible for the synthesis of mitochondrial genome-encoded proteins, including at least some of the essential transmembrane subunits of the mitochondrial respiratory chain. The mitoribosomes are attached to the mitochondrial inner membrane and translation products are cotranslationally integrated into the membrane. In Neurospora crassa (strain ATCC 24698 / 74-OR23-1A / CBS 708.71 / DSM 1257 / FGSC 987), this protein is Small ribosomal subunit protein uS5m (mrps5).